The chain runs to 174 residues: Ribosome maturation factor RimP (174 aa).

Belongs to the RimP family.

It localises to the cytoplasm. Functionally, required for maturation of 30S ribosomal subunits. This is Ribosome maturation factor RimP from Acinetobacter baylyi (strain ATCC 33305 / BD413 / ADP1).